The sequence spans 332 residues: MVNSTHRGMHASLHLWNRSSHRLHSNASESLGKGYSDGGCYEQLFVSPEVFVTLGVISLLENILVIVAIAKNKNLHSPMYFFICSLAVADMLVSVSNGSETIVITLLNSTDTDTQSFTVNIDNVIDSVICSSLLASICSLLSIAVDRYFTIFYALQYHNIMTVKRVRIIISCIWAACTVSGILFIIYSDSSAVIICLITMFFTMLALMASLYVHMFLMARLHIKRIAVLPGTGAIRQGANMKGAITLTILIGVFVVCWAPFFLHLIFYISCPQNPYCVCFMSHFNLYLILIMCNSVIDPLIYALRSQELRKTFKEIICCYPLGGLCDLSSRY.

Topologically, residues 1–43 (MVNSTHRGMHASLHLWNRSSHRLHSNASESLGKGYSDGGCYEQ) are extracellular. 3 N-linked (GlcNAc...) asparagine glycosylation sites follow: asparagine 3, asparagine 17, and asparagine 26. Disulfide bonds link cysteine 40-cysteine 279 and cysteine 271-cysteine 277. A helical transmembrane segment spans residues 44 to 69 (LFVSPEVFVTLGVISLLENILVIVAI). The Cytoplasmic portion of the chain corresponds to 70-81 (AKNKNLHSPMYF). A helical transmembrane segment spans residues 82–106 (FICSLAVADMLVSVSNGSETIVITL). The Ca(2+) site is built by glutamate 100, aspartate 122, and aspartate 126. The Extracellular segment spans residues 107–123 (LNSTDTDTQSFTVNIDN). A helical transmembrane segment spans residues 124-145 (VIDSVICSSLLASICSLLSIAV). Over 146–165 (DRYFTIFYALQYHNIMTVKR) the chain is Cytoplasmic. Residues 166-186 (VRIIISCIWAACTVSGILFII) traverse the membrane as a helical segment. Over 187 to 191 (YSDSS) the chain is Extracellular. A helical transmembrane segment spans residues 192–215 (AVIICLITMFFTMLALMASLYVHM). The Cytoplasmic segment spans residues 216-248 (FLMARLHIKRIAVLPGTGAIRQGANMKGAITLT). Residues 249-271 (ILIGVFVVCWAPFFLHLIFYISC) form a helical membrane-spanning segment. Topologically, residues 272-280 (PQNPYCVCF) are extracellular. Residues 281–304 (MSHFNLYLILIMCNSVIDPLIYAL) traverse the membrane as a helical segment. At 305-332 (RSQELRKTFKEIICCYPLGGLCDLSSRY) the chain is on the cytoplasmic side. Cysteine 318 carries S-palmitoyl cysteine lipidation.

Belongs to the G-protein coupled receptor 1 family. Homodimer; disulfide-linked, also forms higher order oligomers. Interacts with GNAS. Interacts with ATRNL1. Interacts with MGRN1; this interaction competes with GNAS-binding and thus inhibits agonist-induced cAMP production. Interacts with MRAP and MRAP2; these associated factors increase ligand-sensitivity and generation of cAMP.

The protein localises to the cell membrane. Hormone receptor that acts as a key component of the leptin-melanocortin pathway at the intersection of homeostatic maintenance of energetic state. Plays a role in regulating food intake: activation by a stimulating hormone such as anorexigenic alpha-melanocyte stimulating hormone (alpha-MSH) inhibits appetite, whereas binding to a natural antagonist like Agouti-related protein/AGRP promotes appetite. G-protein-coupled receptor that activates conventional Galphas signaling leading to induction of anorexogenic signaling in the hypothalamus to result in negative energy balance. Regulates the firing activity of neurons from the hypothalamus by alpha-MSH and AGRP independently of Galphas signaling by ligand-induced coupling of closure of inwardly rectifying potassium channel KCNJ13. In intestinal epithelial cells, plays a role in the inhibition of hepatic glucose production via nesfatin-1/NUCB2 leading to increased cyclic adenosine monophosphate (cAMP) levels and glucagon-like peptide 1 (GLP-1) secretion in the intestinal epithelium. The sequence is that of Melanocortin receptor 4 (MC4R) from Macaca fascicularis (Crab-eating macaque).